Here is a 1018-residue protein sequence, read N- to C-terminus: Thrombospondin type-1 domain-containing protein 4 (1018 aa).

Residues 1-25 (MVSHFMGSLSVLCFLLLLGFQFVCP) form the signal peptide. The region spanning 53–307 (PGVWGAWGPW…YKLCNTNVCP (255 aa)) is the TSP type-1 1 domain. Disordered stretches follow at residues 111-235 (SVPL…RSGL), 254-279 (PAAS…ATQS), and 534-623 (SPQV…NWKQ). Residues 187–200 (QRLRRQKLSSRHSR) are compositionally biased toward basic residues. Low complexity predominate over residues 201-210 (SQGASSARHG). Residues 259 to 279 (LFHSPETSNNHGVGTHGATQS) are compositionally biased toward polar residues. Basic and acidic residues-rich tracts occupy residues 556-577 (RSQE…RGEA) and 592-603 (RHPDRFSPHRPD). 5 TSP type-1 domains span residues 676–737 (CPAF…KICS), 739–792 (WQIR…DMGP), 793–851 (CAKS…GPCT), 852–911 (GKVE…HLKP), and 912–968 (CGAK…QDCV). The PLAC domain maps to 971–1008 (VDENCKDKYYNCNVVVQARLCVYNYYKTACCASCTRVA).

As to quaternary structure, interacts with FBN1. May interact with TGFB1.

Its subcellular location is the secreted. It is found in the extracellular space. The protein localises to the extracellular matrix. Functionally, promotes FBN1 matrix assembly. Attenuates TGFB signaling, possibly by accelerating the sequestration of large latent complexes of TGFB or active TGFB by FBN1 microfibril assembly, thereby negatively regulating the expression of TGFB regulatory targets, such as POSTN. The sequence is that of Thrombospondin type-1 domain-containing protein 4 (THSD4) from Homo sapiens (Human).